We begin with the raw amino-acid sequence, 506 residues long: MANNRRDRDKGDGSQGEGLSAGGGMPSEPEIVSVTVHPTPTLAVSLKPAQQGDIWASLLESSPWSANHGGRIEPVQPSPAPTRPTESPSVGDLVSRWSQPIWRTPSRVEEVETPESNFVIELEASQPITSDITVSVSDLVIEVQPIQTTEAEPEPELPVAEPEPGVVPVDVVAEAEPEPELPVAEPEPGVVPVDVVAEAEPEPELPVAEPEPEVVPVDVVAEAEPEPELPVAEPEPEVVPVDVVAEAEPEPELPVAEPEPEVVPVDVVAEAEPEPELPVAAPEPEVLPVEVVAEAEPEPELPVAAPEPEVLPVEVVAEAEPEPELPVAAPEPEVVPVDVVAEAEPEPELPVAEPELVHEAAVSEPVAESIEDAVAVPAPATNFGLAELMQAAAAMAPVLASPPSVAPAAKPVREPAKKRKAPPVRKKVATVQDVPVEDLLGGIFGIAGSAVRSVLSLGAGVVGGVVKGGRVIGDNVVAGARRLTGSAEGSCGTCSTSQCDTVGKKK.

The span at Met1–Asp12 shows a compositional bias: basic and acidic residues. 2 disordered regions span residues Met1 to Val36 and Pro63 to Leu93. Residues Gly13–Met25 show a composition bias toward gly residues. Acidic repeat repeat units lie at residues Glu150–Ala173, Glu174–Ala197, Glu198–Ala221, Glu222–Ala245, Glu246–Ala269, Glu270–Ala293, Glu294–Ala317, and Glu318–Ala341. The Acidic repeat 8.5 repeat unit spans residues Glu342–Glu355. The interval Val405 to Val424 is disordered.

This sequence belongs to the magnetosome MamJ protein family. In terms of assembly, forms homooligomers. Interacts with MamK.

The protein resides in the magnetosome. Functionally, regulates the dynamic behavior of MamK filaments; paralog LimJ also promotes MamK turnover. At least one other protein besides MamJ and LimJ is required for MamK turnover. May connect magnetosomes to MamK filaments. Moves from the cell poles towards midcell; movement does not depend on the treadmilling ability of MamK, suggesting MamJ associates and disassociates continuously from the MamK filament. This Paramagnetospirillum magneticum (strain ATCC 700264 / AMB-1) (Magnetospirillum magneticum) protein is Magnetosome-associated protein MamJ (mamJ).